Reading from the N-terminus, the 321-residue chain is D-alanine--D-alanine ligase (321 aa).

The region spanning 121–315 (RSWFLTNNIN…FTNLIEEIIK (195 aa)) is the ATP-grasp domain. 147 to 199 (PVKRPYVIKPLTQGSSIGVEVIFEEDDFNFADYNFPYGYQVIIEQYIKGRELQ) is an ATP binding site. 3 residues coordinate Mg(2+): Glu-268, Glu-282, and Asn-284.

The protein belongs to the D-alanine--D-alanine ligase family. Mg(2+) serves as cofactor. Requires Mn(2+) as cofactor.

It localises to the cytoplasm. It carries out the reaction 2 D-alanine + ATP = D-alanyl-D-alanine + ADP + phosphate + H(+). It functions in the pathway cell wall biogenesis; peptidoglycan biosynthesis. Its function is as follows. Cell wall formation. This is D-alanine--D-alanine ligase from Rickettsia felis (strain ATCC VR-1525 / URRWXCal2) (Rickettsia azadi).